A 397-amino-acid polypeptide reads, in one-letter code: Digeranylgeranylglycerophospholipid reductase 1 (397 aa).

Residues Ala18, Asp37, Cys48, Ala49, Gly51, Arg104, Ala128, Asp284, Gly296, and Ile297 each coordinate FAD.

This sequence belongs to the geranylgeranyl reductase family. DGGGPL reductase subfamily. FAD serves as cofactor.

It carries out the reaction a 2,3-bis-O-phytanyl-sn-glycerol 1-phospholipid + 8 A = a 2,3-bis-O-(geranylgeranyl)-sn-glycerol 1-phospholipid + 8 AH2. It catalyses the reaction 2,3-bis-O-(phytanyl)-sn-glycerol 1-phosphate + 8 A = 2,3-bis-O-(geranylgeranyl)-sn-glycerol 1-phosphate + 8 AH2. The catalysed reaction is CDP-2,3-bis-O-(geranylgeranyl)-sn-glycerol + 8 AH2 = CDP-2,3-bis-O-(phytanyl)-sn-glycerol + 8 A. The enzyme catalyses archaetidylserine + 8 AH2 = 2,3-bis-O-phytanyl-sn-glycero-3-phospho-L-serine + 8 A. The protein operates within membrane lipid metabolism; glycerophospholipid metabolism. Functionally, is involved in the reduction of 2,3-digeranylgeranylglycerophospholipids (unsaturated archaeols) into 2,3-diphytanylglycerophospholipids (saturated archaeols) in the biosynthesis of archaeal membrane lipids. Catalyzes the formation of archaetidic acid (2,3-di-O-phytanyl-sn-glyceryl phosphate) from 2,3-di-O-geranylgeranylglyceryl phosphate (DGGGP) via the hydrogenation of each double bond of the isoprenoid chains. Is also probably able to reduce double bonds of geranyl groups in CDP-2,3-bis-O-(geranylgeranyl)-sn-glycerol and archaetidylserine, thus acting at various stages in the biosynthesis of archaeal membrane lipids. The chain is Digeranylgeranylglycerophospholipid reductase 1 from Methanothermobacter thermautotrophicus (strain ATCC 29096 / DSM 1053 / JCM 10044 / NBRC 100330 / Delta H) (Methanobacterium thermoautotrophicum).